Here is a 127-residue protein sequence, read N- to C-terminus: Protein ApaG (127 aa).

Residues 3–127 (DADVYAISVE…FVLAIPRTLH (125 aa)) enclose the ApaG domain.

This Stenotrophomonas maltophilia (strain K279a) protein is Protein ApaG.